We begin with the raw amino-acid sequence, 275 residues long: Large ribosomal subunit protein uL2 (275 aa).

A disordered region spans residues 218–275; the sequence is RPQTRGSAMNPIDHPHGGGEGKTNSGRHPVSPWGMPTKGYKTRKKKASDKLIISKRKK. A compositionally biased stretch (basic residues) spans 257 to 275; sequence YKTRKKKASDKLIISKRKK.

Belongs to the universal ribosomal protein uL2 family. In terms of assembly, part of the 50S ribosomal subunit. Forms a bridge to the 30S subunit in the 70S ribosome.

One of the primary rRNA binding proteins. Required for association of the 30S and 50S subunits to form the 70S ribosome, for tRNA binding and peptide bond formation. It has been suggested to have peptidyltransferase activity; this is somewhat controversial. Makes several contacts with the 16S rRNA in the 70S ribosome. This Sulfurovum sp. (strain NBC37-1) protein is Large ribosomal subunit protein uL2.